The following is a 201-amino-acid chain: MSRAVAGPEIERLIQLLGRLPGLGPRSARRATLHLIKKRETLMAPLGLALQDVLGKIVECQVCGNVDVRDPCTVCTDIHRDSSVLVVVAEVADLWALERANAINAKYHVLGGVLSPLDGVGPDDLNLTKLVERVGAGGVNEVILALGATVDAQTTAHYVTDLLRETGVKVTRLAHGVPVGGELDHLDEGTLSAAIRARTAL.

A C4-type zinc finger spans residues 60–75; it reads CQVCGNVDVRDPCTVC. Residues 83–178 enclose the Toprim domain; it reads SVLVVVAEVA…KVTRLAHGVP (96 aa).

This sequence belongs to the RecR family.

Functionally, may play a role in DNA repair. It seems to be involved in an RecBC-independent recombinational process of DNA repair. It may act with RecF and RecO. This Azorhizobium caulinodans (strain ATCC 43989 / DSM 5975 / JCM 20966 / LMG 6465 / NBRC 14845 / NCIMB 13405 / ORS 571) protein is Recombination protein RecR.